The primary structure comprises 474 residues: Glycogen synthase (474 aa).

ADP-alpha-D-glucose is bound at residue K15.

This sequence belongs to the glycosyltransferase 1 family. Bacterial/plant glycogen synthase subfamily.

It catalyses the reaction [(1-&gt;4)-alpha-D-glucosyl](n) + ADP-alpha-D-glucose = [(1-&gt;4)-alpha-D-glucosyl](n+1) + ADP + H(+). The protein operates within glycan biosynthesis; glycogen biosynthesis. Its function is as follows. Synthesizes alpha-1,4-glucan chains using ADP-glucose. The protein is Glycogen synthase of Chlamydia trachomatis serovar D (strain ATCC VR-885 / DSM 19411 / UW-3/Cx).